The chain runs to 201 residues: Ras-related protein Rab-9A (201 aa).

Ala-2 is subject to N-acetylalanine. Gly-17 is a binding site for GDP. GTP is bound by residues Gly-17, Val-18, Gly-19, Lys-20, Ser-21, Ser-22, Thr-34, His-38, and Thr-39. 4 residues coordinate GDP: Gly-19, Lys-20, Ser-21, and Ser-22. Ser-21 contacts Mg(2+). Residues 31 to 42 (KFDTQLFHTIGV) carry the Switch 1 motif. Residues Thr-39 and Asp-62 each coordinate Mg(2+). The short motif at 64–78 (AGQERFRSLRTPFYR) is the Switch 2 element. GTP is bound by residues Gly-65, Asn-124, Lys-125, and Asp-127. Residues Asn-124, Lys-125, Asp-127, Ala-155, and Lys-156 each coordinate GDP. Residue Lys-156 coordinates GTP. Ser-179 carries the post-translational modification Phosphoserine. Thr-187 bears the Phosphothreonine mark. Residues Cys-200 and Cys-201 are each lipidated (S-geranylgeranyl cysteine).

The protein belongs to the small GTPase superfamily. Rab family. In terms of assembly, interacts (preferentially in its GTP-bound form) with GCC2 (via its GRIP domain). Interacts (GTP-bound form) with SGSM1; the GDP-bound form has much lower affinity for SGSM1. Interacts with SGSM2. The GTP-bound form but not the GDP-bound form interacts with HPS4 and the BLOC-3 complex (heterodimer of HPS1 and HPS4) but does not interact with HPS1 alone. Interacts (GTP-bound form) with NDE1; two RAB9A-GTP molecules lie on the opposite sides of the NDE1 homodimer; the interaction leads to RAB9A-dynein motor tethering. Interacts (GTP-bound form) with NDEL1. Mg(2+) is required as a cofactor.

The protein localises to the cell membrane. It is found in the endoplasmic reticulum membrane. Its subcellular location is the golgi apparatus membrane. It localises to the late endosome. The protein resides in the cytoplasmic vesicle. The protein localises to the phagosome membrane. It is found in the phagosome. Its subcellular location is the cytoplasmic vesicle membrane. It localises to the melanosome. It carries out the reaction GTP + H2O = GDP + phosphate + H(+). Its activity is regulated as follows. Regulated by guanine nucleotide exchange factors (GEFs) which promote the exchange of bound GDP for free GTP. Regulated by GTPase activating proteins (GAPs) which increase the GTP hydrolysis activity. Inhibited by GDP dissociation inhibitors (GDIs). In terms of biological role, the small GTPases Rab are key regulators of intracellular membrane trafficking, from the formation of transport vesicles to their fusion with membranes. Rabs cycle between an inactive GDP-bound form and an active GTP-bound form that is able to recruit to membranes different sets of downstream effectors directly responsible for vesicle formation, movement, tethering and fusion. RAB9A is involved in the transport of proteins between the endosomes and the trans-Golgi network (TGN). Specifically uses NDE1/NDEL1 as an effector to interact with the dynein motor complex in order to control retrograde trafficking of RAB9-associated late endosomes to the TGN. Involved in the recruitment of SGSM2 to melanosomes and is required for the proper trafficking of melanogenic enzymes TYR, TYRP1 and DCT/TYRP2 to melanosomes in melanocytes. The sequence is that of Ras-related protein Rab-9A (RAB9A) from Canis lupus familiaris (Dog).